Reading from the N-terminus, the 411-residue chain is Serine hydroxymethyltransferase (411 aa).

(6S)-5,6,7,8-tetrahydrofolate contacts are provided by residues Leu113 and 117-119; that span reads GHL. Residue Lys222 is modified to N6-(pyridoxal phosphate)lysine. 346–348 is a binding site for (6S)-5,6,7,8-tetrahydrofolate; that stretch reads SPF.

The protein belongs to the SHMT family. In terms of assembly, homodimer. The cofactor is pyridoxal 5'-phosphate.

It localises to the cytoplasm. It carries out the reaction (6R)-5,10-methylene-5,6,7,8-tetrahydrofolate + glycine + H2O = (6S)-5,6,7,8-tetrahydrofolate + L-serine. Its pathway is one-carbon metabolism; tetrahydrofolate interconversion. It participates in amino-acid biosynthesis; glycine biosynthesis; glycine from L-serine: step 1/1. Its function is as follows. Catalyzes the reversible interconversion of serine and glycine with tetrahydrofolate (THF) serving as the one-carbon carrier. This reaction serves as the major source of one-carbon groups required for the biosynthesis of purines, thymidylate, methionine, and other important biomolecules. Also exhibits THF-independent aldolase activity toward beta-hydroxyamino acids, producing glycine and aldehydes, via a retro-aldol mechanism. The sequence is that of Serine hydroxymethyltransferase from Prochlorococcus marinus (strain NATL2A).